Consider the following 325-residue polypeptide: Putative gluconeogenesis factor (325 aa).

The protein belongs to the gluconeogenesis factor family.

The protein localises to the cytoplasm. Functionally, required for morphogenesis under gluconeogenic growth conditions. This chain is Putative gluconeogenesis factor, found in Streptococcus pyogenes serotype M1.